A 219-amino-acid polypeptide reads, in one-letter code: MIKTKICGLTEVGQALATARTGADFAGVVFAESKRRITTEKALEIAEALKPLNPRPMLVGVFANQTAEEVNRIASVCRLDRVQLSGNESWEYCNQVNLPVIKVIHVAEGTTAELVIQEIQAGLKALKKTPVFLLDTHTKALFGGSGQSFDWQIVKQVSLKYPVMVAGGLNPENIQGFIKIAKPWGIDVASGVETDGIKDTAKIHLFIERVKDADGNRIC.

It belongs to the TrpF family.

The enzyme catalyses N-(5-phospho-beta-D-ribosyl)anthranilate = 1-(2-carboxyphenylamino)-1-deoxy-D-ribulose 5-phosphate. It functions in the pathway amino-acid biosynthesis; L-tryptophan biosynthesis; L-tryptophan from chorismate: step 3/5. This chain is N-(5'-phosphoribosyl)anthranilate isomerase, found in Dehalococcoides mccartyi (strain ATCC BAA-2266 / KCTC 15142 / 195) (Dehalococcoides ethenogenes (strain 195)).